Consider the following 260-residue polypeptide: Serine/threonine-protein acetyltransferase NGR_a02610 (260 aa).

Residues H123 and E143 contribute to the active site. H123 is a CoA binding site. 180 to 181 contributes to the CoA binding site; the sequence is KS. C185 is a catalytic residue.

The protein belongs to the acetyltransferase YopJ family.

The enzyme catalyses L-threonyl-[protein] + acetyl-CoA = O-acetyl-L-threonyl-[protein] + CoA. It catalyses the reaction L-seryl-[protein] + acetyl-CoA = O-acetyl-L-seryl-[protein] + CoA. Its function is as follows. Serine/threonine-protein acetyltransferase translocated into infected cells, which mediates acetylation of serine and threonine residues of host target proteins. The sequence is that of Serine/threonine-protein acetyltransferase NGR_a02610 from Sinorhizobium fredii (strain NBRC 101917 / NGR234).